The chain runs to 429 residues: Adenylosuccinate synthetase (429 aa).

Residues 15-21 and 43-45 contribute to the GTP site; these read GDEGKGK and GHV. Asp16 acts as the Proton acceptor in catalysis. Residues Asp16 and Gly43 each contribute to the Mg(2+) site. IMP-binding positions include 16–19, 41–44, Thr131, Arg145, Gln225, Thr240, and Arg304; these read DEGK and NAGH. The active-site Proton donor is the His44. 300–306 contacts substrate; sequence SNTKRPR. GTP contacts are provided by residues Arg306, 332–334, and 414–416; these read LLD and SVG.

It belongs to the adenylosuccinate synthetase family. In terms of assembly, homodimer. Mg(2+) is required as a cofactor.

It is found in the cytoplasm. The catalysed reaction is IMP + L-aspartate + GTP = N(6)-(1,2-dicarboxyethyl)-AMP + GDP + phosphate + 2 H(+). It participates in purine metabolism; AMP biosynthesis via de novo pathway; AMP from IMP: step 1/2. Plays an important role in the de novo pathway of purine nucleotide biosynthesis. Catalyzes the first committed step in the biosynthesis of AMP from IMP. The protein is Adenylosuccinate synthetase of Mesoplasma florum (strain ATCC 33453 / NBRC 100688 / NCTC 11704 / L1) (Acholeplasma florum).